The sequence spans 118 residues: Ribonuclease P protein component 4 (118 aa).

C59, C62, C85, and C88 together coordinate Zn(2+).

The protein belongs to the eukaryotic/archaeal RNase P protein component 4 family. Consists of a catalytic RNA component and at least 4-5 protein subunits. Zn(2+) serves as cofactor.

Its subcellular location is the cytoplasm. The catalysed reaction is Endonucleolytic cleavage of RNA, removing 5'-extranucleotides from tRNA precursor.. Part of ribonuclease P, a protein complex that generates mature tRNA molecules by cleaving their 5'-ends. The chain is Ribonuclease P protein component 4 from Sulfolobus acidocaldarius (strain ATCC 33909 / DSM 639 / JCM 8929 / NBRC 15157 / NCIMB 11770).